The following is a 310-amino-acid chain: Solute carrier family 25 member 47 (310 aa).

Solcar repeat units lie at residues 1–80 (MDFV…CLAH), 93–208 (PTKA…LCEW), and 217–304 (PDVL…VLRL). The next 6 membrane-spanning stretches (helical) occupy residues 3 to 23 (FVAG…LDTV), 55 to 75 (GLSL…GTYH), 98 to 114 (ITLS…FLTS), 194 to 210 (SFAT…EWLT), 219 to 239 (VLGV…VATP), and 280 to 298 (LALN…FVAY).

The protein belongs to the mitochondrial carrier (TC 2.A.29) family. As to expression, specifically expressed in liver (at protein level).

It is found in the mitochondrion inner membrane. Its subcellular location is the mitochondrion outer membrane. It carries out the reaction NAD(+)(in) = NAD(+)(out). The catalysed reaction is acetyl-CoA(in) = acetyl-CoA(out). Functionally, mitochondrial NAD(+) transporter that acts as a 'metabolic gate' in hepatic lipogenesis. Provides NAD(+) substrate to mitochondrial SIRT3 deacetylase and enables its NAD(+)-dependent activities in mitochondrial energy metabolism. This triggers downstream activation of PRKAA1/AMPK-alpha signaling cascade that negatively regulates sterol regulatory element-binding protein (SREBP) transcriptional activities and ATP-consuming lipogenesis to restore cellular energy balance. May transport other mitochondrial metabolites having an aromatic nucleotide and phosphate groups, such as acetyl-CoA. Does not transport amino acids. The transport mechanism remains to be elucidated. The sequence is that of Solute carrier family 25 member 47 from Mus musculus (Mouse).